The following is a 301-amino-acid chain: Sulfate adenylyltransferase subunit 2 (301 aa).

Positions 279 to 301 (RQGRLIDRDEAGSMEKKKREGYF) are disordered.

Belongs to the PAPS reductase family. CysD subfamily. As to quaternary structure, heterodimer composed of CysD, the smaller subunit, and CysN.

The catalysed reaction is sulfate + ATP + H(+) = adenosine 5'-phosphosulfate + diphosphate. The protein operates within sulfur metabolism; hydrogen sulfide biosynthesis; sulfite from sulfate: step 1/3. With CysN forms the ATP sulfurylase (ATPS) that catalyzes the adenylation of sulfate producing adenosine 5'-phosphosulfate (APS) and diphosphate, the first enzymatic step in sulfur assimilation pathway. APS synthesis involves the formation of a high-energy phosphoric-sulfuric acid anhydride bond driven by GTP hydrolysis by CysN coupled to ATP hydrolysis by CysD. The polypeptide is Sulfate adenylyltransferase subunit 2 (Mesorhizobium japonicum (strain LMG 29417 / CECT 9101 / MAFF 303099) (Mesorhizobium loti (strain MAFF 303099))).